The primary structure comprises 117 residues: Protein RALF-like 32 (117 aa).

Residues 1-26 (MEIKPSRIFSTITIFFLCLLLAHVTS) form the signal peptide. A propeptide spans 27–64 (KASSSSLCNGSVAECSSMVETEEMSVIMESWSSQRLTE) (removed in mature form). Residue Asn-35 is glycosylated (N-linked (GlcNAc...) asparagine). A disordered region spans residues 77–107 (RNQPACDGGKRGESYSTQCLPPPSNPYSRGC). 2 disulfides stabilise this stretch: Cys-82/Cys-95 and Cys-107/Cys-113.

This sequence belongs to the plant rapid alkalinization factor (RALF) family. Proteolytically cleaved, probably by S1P, a subtilisin-like serine protease (subtilase).

The protein resides in the secreted. In terms of biological role, cell signaling peptide that may regulate plant stress, growth, and development. Mediates a rapid alkalinization of extracellular space by mediating a transient increase in the cytoplasmic Ca(2+) concentration leading to a calcium-dependent signaling events through a cell surface receptor and a concomitant activation of some intracellular mitogen-activated protein kinases. This chain is Protein RALF-like 32 (RALFL32), found in Arabidopsis thaliana (Mouse-ear cress).